Reading from the N-terminus, the 173-residue chain is MVVGWSLLGWALSWLAVATVVVSAIVTVDKEALTRECDPDTPMVVPNFKANWFKATEYCHYLDRNLVIVTSAEKQEVITKVLEGTDKFGDNSFWVGGSDLAELGNFHWHSTGTRIVWHNWSELVPMPTADDPTRKDDRCVLLSNNTEMGGFKWIVVNCWDEYYFVCEKGVFAK.

Positions 1 to 24 (MVVGWSLLGWALSWLAVATVVVSA) are cleaved as a signal peptide. A C-type lectin domain is found at 51 to 167 (NWFKATEYCH…CWDEYYFVCE (117 aa)). Disulfide bonds link Cys59-Cys166 and Cys139-Cys158. Asn119 and Asn144 each carry an N-linked (GlcNAc...) asparagine glycan.

Interacts with putative receptor-type tyrosine-protein phosphatase mosPTP-1; the interaction may mediate the recruitment of Japanese encephalitis virus particles in complex with C-type lectin mosGCTL-7 to the cell surface.

It is found in the secreted. Functionally, carbohydrate-binding protein. In terms of biological role, (Microbial infection) Facilitates Japanese encephalitis virus infection in mosquitoes. In Culex quinquefasciatus (Southern house mosquito), this protein is C-type lectin mosGCTL-7.